Consider the following 85-residue polypeptide: UPF0297 protein LGAS_0422 (85 aa).

This sequence belongs to the UPF0297 family.

This Lactobacillus gasseri (strain ATCC 33323 / DSM 20243 / BCRC 14619 / CIP 102991 / JCM 1131 / KCTC 3163 / NCIMB 11718 / NCTC 13722 / AM63) protein is UPF0297 protein LGAS_0422.